Consider the following 188-residue polypeptide: MKGLIIVGSAKVGSHTNALAKYLVGQFDTHDLDVDIYDLAERPLNQLDFSGTTPSIDEIKTNIKDFQEKVMAADFLVLGTPNYHGSYSGILKNALDHINMDYVKMKPVGLIGNSGGIVSSEPLSHLRVIVRSLLGIAVPTQIATHDSDYSKLDDGTLYLDDDQFQLRAKLFVDQIVSFVNNSPYEHLK.

The protein belongs to the azoreductase type 2 family. As to quaternary structure, homotetramer. Requires FMN as cofactor.

Functionally, catalyzes the reductive cleavage of azo bond in aromatic azo compounds to the corresponding amines. Requires NADPH, but not NADH, as an electron donor for its activity. The chain is FMN-dependent NADPH-azoreductase (azo1) from Staphylococcus haemolyticus (strain JCSC1435).